The sequence spans 98 residues: Protein S100-A11 (98 aa).

At Thr5 the chain carries Phosphothreonine. 2 consecutive EF-hand domains span residues 8–44 (CIES…ELAA) and 50–85 (KDPG…LAIA). An N6-acetyllysine modification is found at Lys22. 8 residues coordinate Ca(2+): Asn26, Gln28, Glu33, Asp63, Asn65, Asp67, Gln69, and Glu74.

The protein belongs to the S-100 family. As to quaternary structure, homodimer; disulfide-linked. Phosphorylation at Thr-5 significantly suppresses homodimerization and promotes association with NCL/nucleolin which induces nuclear translocation.

The protein localises to the cytoplasm. It is found in the nucleus. Its function is as follows. Facilitates the differentiation and the cornification of keratinocytes. The protein is Protein S100-A11 (S100a11) of Mus musculus (Mouse).